A 43-amino-acid polypeptide reads, in one-letter code: Protein PsbN (43 aa).

Residues 4–24 traverse the membrane as a helical segment; sequence ATIIVIFVSSLLVGITAYSVY.

Belongs to the PsbN family.

It is found in the plastid. The protein localises to the chloroplast thylakoid membrane. May play a role in photosystem I and II biogenesis. In Thalassiosira pseudonana (Marine diatom), this protein is Protein PsbN.